The chain runs to 79 residues: Dolichyl-diphosphooligosaccharide--protein glycosyltransferase subunit TMEM258 (79 aa).

2 helical membrane-spanning segments follow: residues Val17–Phe37 and Leu55–Val75.

Belongs to the OST5 family. As to quaternary structure, component of the oligosaccharyltransferase (OST) complex.

It localises to the membrane. It is found in the endoplasmic reticulum. The protein resides in the cytoplasm. The protein operates within protein modification; protein glycosylation. Subunit of the oligosaccharyl transferase (OST) complex that catalyzes the initial transfer of a defined glycan (Glc(3)Man(9)GlcNAc(2) in eukaryotes) from the lipid carrier dolichol-pyrophosphate to an asparagine residue within an Asn-X-Ser/Thr consensus motif in nascent polypeptide chains, the first step in protein N-glycosylation. N-glycosylation occurs cotranslationally and the complex associates with the Sec61 complex at the channel-forming translocon complex that mediates protein translocation across the endoplasmic reticulum (ER). All subunits are required for a maximal enzyme activity. The chain is Dolichyl-diphosphooligosaccharide--protein glycosyltransferase subunit TMEM258 from Xenopus laevis (African clawed frog).